A 147-amino-acid polypeptide reads, in one-letter code: Lysozyme C-2 (147 aa).

The signal sequence occupies residues 1-18 (MKALVILGFLFLSVAVQG). Residues 19-147 (KVFERCELAR…VSSYVEGCTL (129 aa)) form the C-type lysozyme domain. Disulfide bonds link C24–C145, C48–C133, C83–C99, and C95–C113. Residues E53 and D71 contribute to the active site.

The protein belongs to the glycosyl hydrolase 22 family. As to quaternary structure, monomer. In terms of tissue distribution, stomach-specific.

It carries out the reaction Hydrolysis of (1-&gt;4)-beta-linkages between N-acetylmuramic acid and N-acetyl-D-glucosamine residues in a peptidoglycan and between N-acetyl-D-glucosamine residues in chitodextrins.. Functionally, lysozymes have primarily a bacteriolytic function; those in tissues and body fluids are associated with the monocyte-macrophage system and enhance the activity of immunoagents. The protein is Lysozyme C-2 (LYZ2) of Bos taurus (Bovine).